The sequence spans 449 residues: Tryptophan synthase beta chain 2 (449 aa).

Lys-116 carries the post-translational modification N6-(pyridoxal phosphate)lysine.

Belongs to the TrpB family. As to quaternary structure, tetramer of two alpha and two beta chains. It depends on pyridoxal 5'-phosphate as a cofactor.

The catalysed reaction is (1S,2R)-1-C-(indol-3-yl)glycerol 3-phosphate + L-serine = D-glyceraldehyde 3-phosphate + L-tryptophan + H2O. It functions in the pathway amino-acid biosynthesis; L-tryptophan biosynthesis; L-tryptophan from chorismate: step 5/5. In terms of biological role, the beta subunit is responsible for the synthesis of L-tryptophan from indole and L-serine. This is Tryptophan synthase beta chain 2 (trpB2) from Aeropyrum pernix (strain ATCC 700893 / DSM 11879 / JCM 9820 / NBRC 100138 / K1).